We begin with the raw amino-acid sequence, 146 residues long: VHLTPEEKTAVTTLWGKVNVDEVGGEALGRLLVVYPWTQRFFDSFGDLSSPDAVMGNPKVKAHGKKVLGAFSDGLNHLDNLKGTFAQLSELHCDKLHVDPENFKLLGNVLVCVLAHHFGKEFTPQVQAAYQKVVAGVANALAHKYH.

V1 carries the post-translational modification N-acetylvaline. The region spanning 2–146 is the Globin domain; sequence HLTPEEKTAV…VANALAHKYH (145 aa). The residue at position 12 (T12) is a Phosphothreonine. S44 carries the post-translational modification Phosphoserine. K59 carries the post-translational modification N6-acetyllysine. H63 is a binding site for heme b. An N6-acetyllysine modification is found at K82. H92 provides a ligand contact to heme b. S-nitrosocysteine is present on C93. N6-acetyllysine is present on K144.

It belongs to the globin family. Heterotetramer of two alpha chains and two beta chains. Red blood cells.

Functionally, involved in oxygen transport from the lung to the various peripheral tissues. The polypeptide is Hemoglobin subunit beta (HBB) (Mandrillus sphinx (Mandrill)).